We begin with the raw amino-acid sequence, 398 residues long: uncharacterized protein (398 aa).

The first 22 residues, 1–22 (MKLKFYKLPLITTAFSFVFLTA), serve as a signal peptide directing secretion. Cys23 is lipidated: N-palmitoyl cysteine. Cys23 carries the S-diacylglycerol cysteine lipid modification.

It localises to the cell membrane. This is an uncharacterized protein from Mycoplasma genitalium (strain ATCC 33530 / DSM 19775 / NCTC 10195 / G37) (Mycoplasmoides genitalium).